The chain runs to 85 residues: Probable Thioredoxin (85 aa).

The Glutaredoxin domain occupies 2–85; sequence VVNIEVFTSP…LFEAINDEME (84 aa). A disulfide bridge connects residues cysteine 13 and cysteine 16.

The protein belongs to the glutaredoxin family.

The protein localises to the cytoplasm. Acts to maintain redox homeostasis; functions as a protein disulfide reductase. This chain is Probable Thioredoxin, found in Methanothermobacter thermautotrophicus (strain ATCC 29096 / DSM 1053 / JCM 10044 / NBRC 100330 / Delta H) (Methanobacterium thermoautotrophicum).